The chain runs to 43 residues: METATLVAISISGLLVSFTGYALYTAFGQPSQQLRDPFEEHGD.

A helical transmembrane segment spans residues 5–27 (TLVAISISGLLVSFTGYALYTAF).

This sequence belongs to the PsbN family.

It is found in the plastid. It localises to the chloroplast thylakoid membrane. In terms of biological role, may play a role in photosystem I and II biogenesis. This chain is Protein PsbN, found in Eucalyptus globulus subsp. globulus (Tasmanian blue gum).